We begin with the raw amino-acid sequence, 122 residues long: Large ribosomal subunit protein uL14c (122 aa).

The protein belongs to the universal ribosomal protein uL14 family. As to quaternary structure, part of the 50S ribosomal subunit.

The protein resides in the plastid. It localises to the chloroplast. Its function is as follows. Binds to 23S rRNA. This chain is Large ribosomal subunit protein uL14c, found in Phalaenopsis aphrodite subsp. formosana (Moth orchid).